Reading from the N-terminus, the 387-residue chain is Succinyl-diaminopimelate desuccinylase (387 aa).

Position 74 (histidine 74) interacts with Zn(2+). The active site involves aspartate 76. Residue aspartate 107 participates in Zn(2+) binding. The active-site Proton acceptor is the glutamate 142. Residues glutamate 143, glutamate 171, and histidine 360 each contribute to the Zn(2+) site.

It belongs to the peptidase M20A family. DapE subfamily. As to quaternary structure, homodimer. Requires Zn(2+) as cofactor. Co(2+) is required as a cofactor.

It carries out the reaction N-succinyl-(2S,6S)-2,6-diaminopimelate + H2O = (2S,6S)-2,6-diaminopimelate + succinate. The protein operates within amino-acid biosynthesis; L-lysine biosynthesis via DAP pathway; LL-2,6-diaminopimelate from (S)-tetrahydrodipicolinate (succinylase route): step 3/3. Functionally, catalyzes the hydrolysis of N-succinyl-L,L-diaminopimelic acid (SDAP), forming succinate and LL-2,6-diaminopimelate (DAP), an intermediate involved in the bacterial biosynthesis of lysine and meso-diaminopimelic acid, an essential component of bacterial cell walls. The polypeptide is Succinyl-diaminopimelate desuccinylase (Rhodopseudomonas palustris (strain TIE-1)).